The following is a 140-amino-acid chain: Ctenidin-1 (140 aa).

Residues 1-19 (MKHLIPLIVMASVVLAVYA) form the signal peptide. Gly138 is modified (glycine amide).

This sequence belongs to the glycine-rich peptide family. Expressed in hemocytes (at protein level).

It is found in the secreted. In terms of biological role, antimicrobial protein with bacteriostatic activity against the Gram-negative bacterium E.coli, and very weak activity against the Gram-positive bacterium S.aureus. Lacks activity against the yeast C.albicans. The sequence is that of Ctenidin-1 from Cupiennius salei (American wandering spider).